We begin with the raw amino-acid sequence, 425 residues long: Dual-specificity RNA methyltransferase RlmN (425 aa).

The active-site Proton acceptor is glutamate 136. Residues 142-381 (GDDRGTLCVS…FTAGYASPVR (240 aa)) enclose the Radical SAM core domain. An intrachain disulfide couples cysteine 149 to cysteine 392. [4Fe-4S] cluster-binding residues include cysteine 156, cysteine 160, and cysteine 163. S-adenosyl-L-methionine is bound by residues 218-219 (GE), serine 250, 272-274 (SLH), and asparagine 349. The active-site S-methylcysteine intermediate is cysteine 392.

The protein belongs to the radical SAM superfamily. RlmN family. The cofactor is [4Fe-4S] cluster.

The protein resides in the cytoplasm. It catalyses the reaction adenosine(2503) in 23S rRNA + 2 reduced [2Fe-2S]-[ferredoxin] + 2 S-adenosyl-L-methionine = 2-methyladenosine(2503) in 23S rRNA + 5'-deoxyadenosine + L-methionine + 2 oxidized [2Fe-2S]-[ferredoxin] + S-adenosyl-L-homocysteine. It carries out the reaction adenosine(37) in tRNA + 2 reduced [2Fe-2S]-[ferredoxin] + 2 S-adenosyl-L-methionine = 2-methyladenosine(37) in tRNA + 5'-deoxyadenosine + L-methionine + 2 oxidized [2Fe-2S]-[ferredoxin] + S-adenosyl-L-homocysteine. Its function is as follows. Specifically methylates position 2 of adenine 2503 in 23S rRNA and position 2 of adenine 37 in tRNAs. m2A2503 modification seems to play a crucial role in the proofreading step occurring at the peptidyl transferase center and thus would serve to optimize ribosomal fidelity. The polypeptide is Dual-specificity RNA methyltransferase RlmN (Methylorubrum extorquens (strain PA1) (Methylobacterium extorquens)).